Here is a 212-residue protein sequence, read N- to C-terminus: tRNA(Phe) 7-((3-amino-3-carboxypropyl)-4-demethylwyosine(37)-N(4))-methyltransferase 2 (212 aa).

It belongs to the TYW3 family.

The catalysed reaction is 4-demethyl-7-[(3S)-3-amino-3-carboxypropyl]wyosine(37) in tRNA(Phe) + S-adenosyl-L-methionine = 7-[(3S)-3-amino-3-carboxypropyl]wyosine(37) in tRNA(Phe) + S-adenosyl-L-homocysteine + H(+). S-adenosyl-L-methionine-dependent methyltransferase that acts as a component of the wyosine derivatives biosynthesis pathway. Probably methylates N-4 position of wybutosine-86 to produce wybutosine-72. The chain is tRNA(Phe) 7-((3-amino-3-carboxypropyl)-4-demethylwyosine(37)-N(4))-methyltransferase 2 from Thermococcus kodakarensis (strain ATCC BAA-918 / JCM 12380 / KOD1) (Pyrococcus kodakaraensis (strain KOD1)).